A 149-amino-acid polypeptide reads, in one-letter code: Large ribosomal subunit protein bL9 (149 aa).

Belongs to the bacterial ribosomal protein bL9 family.

In terms of biological role, binds to the 23S rRNA. The sequence is that of Large ribosomal subunit protein bL9 from Clostridioides difficile (strain 630) (Peptoclostridium difficile).